A 323-amino-acid polypeptide reads, in one-letter code: Cytochrome c biogenesis protein CcsA (323 aa).

8 consecutive transmembrane segments (helical) span residues 9 to 29, 45 to 62, 71 to 91, 98 to 118, 143 to 163, 227 to 247, 261 to 275, and 285 to 305; these read ILTH…LLNL, MMAT…RWIY, LYES…VPYF, LSAI…SGLL, MLLG…LLVI, IISL…VWAN, TWAF…IYLH, and VGPA…YFGV.

It belongs to the CcmF/CycK/Ccl1/NrfE/CcsA family. In terms of assembly, may interact with Ccs1.

It is found in the plastid. Its subcellular location is the chloroplast thylakoid membrane. Functionally, required during biogenesis of c-type cytochromes (cytochrome c6 and cytochrome f) at the step of heme attachment. This chain is Cytochrome c biogenesis protein CcsA, found in Calycanthus floridus var. glaucus (Eastern sweetshrub).